Here is a 216-residue protein sequence, read N- to C-terminus: Thiamine-phosphate synthase (216 aa).

Residues 40–44 and Asn72 each bind 4-amino-2-methyl-5-(diphosphooxymethyl)pyrimidine; that span reads QLRIK. Mg(2+)-binding residues include Asp73 and Asp92. 4-amino-2-methyl-5-(diphosphooxymethyl)pyrimidine is bound at residue Ser111. 137–139 provides a ligand contact to 2-[(2R,5Z)-2-carboxy-4-methylthiazol-5(2H)-ylidene]ethyl phosphate; the sequence is TTT. A 4-amino-2-methyl-5-(diphosphooxymethyl)pyrimidine-binding site is contributed by Lys140. 2-[(2R,5Z)-2-carboxy-4-methylthiazol-5(2H)-ylidene]ethyl phosphate contacts are provided by residues Gly169 and 189–190; that span reads VS.

Belongs to the thiamine-phosphate synthase family. The cofactor is Mg(2+).

The catalysed reaction is 2-[(2R,5Z)-2-carboxy-4-methylthiazol-5(2H)-ylidene]ethyl phosphate + 4-amino-2-methyl-5-(diphosphooxymethyl)pyrimidine + 2 H(+) = thiamine phosphate + CO2 + diphosphate. It carries out the reaction 2-(2-carboxy-4-methylthiazol-5-yl)ethyl phosphate + 4-amino-2-methyl-5-(diphosphooxymethyl)pyrimidine + 2 H(+) = thiamine phosphate + CO2 + diphosphate. It catalyses the reaction 4-methyl-5-(2-phosphooxyethyl)-thiazole + 4-amino-2-methyl-5-(diphosphooxymethyl)pyrimidine + H(+) = thiamine phosphate + diphosphate. Its pathway is cofactor biosynthesis; thiamine diphosphate biosynthesis; thiamine phosphate from 4-amino-2-methyl-5-diphosphomethylpyrimidine and 4-methyl-5-(2-phosphoethyl)-thiazole: step 1/1. In terms of biological role, condenses 4-methyl-5-(beta-hydroxyethyl)thiazole monophosphate (THZ-P) and 2-methyl-4-amino-5-hydroxymethyl pyrimidine pyrophosphate (HMP-PP) to form thiamine monophosphate (TMP). In Photorhabdus laumondii subsp. laumondii (strain DSM 15139 / CIP 105565 / TT01) (Photorhabdus luminescens subsp. laumondii), this protein is Thiamine-phosphate synthase.